The following is a 187-amino-acid chain: Large ribosomal subunit protein uL5 (187 aa).

Belongs to the universal ribosomal protein uL5 family. In terms of assembly, part of the 50S ribosomal subunit; part of the 5S rRNA/L5/L18/L25 subcomplex. Contacts the 5S rRNA and the P site tRNA. Forms a bridge to the 30S subunit in the 70S ribosome.

Functionally, this is one of the proteins that bind and probably mediate the attachment of the 5S RNA into the large ribosomal subunit, where it forms part of the central protuberance. In the 70S ribosome it contacts protein S13 of the 30S subunit (bridge B1b), connecting the 2 subunits; this bridge is implicated in subunit movement. Contacts the P site tRNA; the 5S rRNA and some of its associated proteins might help stabilize positioning of ribosome-bound tRNAs. The protein is Large ribosomal subunit protein uL5 of Nocardia farcinica (strain IFM 10152).